The primary structure comprises 123 residues: Large ribosomal subunit protein bL12 (123 aa).

It belongs to the bacterial ribosomal protein bL12 family. In terms of assembly, homodimer. Part of the ribosomal stalk of the 50S ribosomal subunit. Forms a multimeric L10(L12)X complex, where L10 forms an elongated spine to which 2 to 4 L12 dimers bind in a sequential fashion. Binds GTP-bound translation factors.

Its function is as follows. Forms part of the ribosomal stalk which helps the ribosome interact with GTP-bound translation factors. Is thus essential for accurate translation. The protein is Large ribosomal subunit protein bL12 of Shewanella sp. (strain MR-4).